We begin with the raw amino-acid sequence, 363 residues long: Chorismate synthase (363 aa).

NADP(+) contacts are provided by Arg-48 and Arg-54. FMN is bound by residues 125–127 (RSS), 237–238 (NA), Gly-277, 292–296 (KPTSS), and Arg-318.

Belongs to the chorismate synthase family. As to quaternary structure, homotetramer. FMNH2 is required as a cofactor.

The catalysed reaction is 5-O-(1-carboxyvinyl)-3-phosphoshikimate = chorismate + phosphate. Its pathway is metabolic intermediate biosynthesis; chorismate biosynthesis; chorismate from D-erythrose 4-phosphate and phosphoenolpyruvate: step 7/7. Its function is as follows. Catalyzes the anti-1,4-elimination of the C-3 phosphate and the C-6 proR hydrogen from 5-enolpyruvylshikimate-3-phosphate (EPSP) to yield chorismate, which is the branch point compound that serves as the starting substrate for the three terminal pathways of aromatic amino acid biosynthesis. This reaction introduces a second double bond into the aromatic ring system. The chain is Chorismate synthase from Ectopseudomonas mendocina (strain ymp) (Pseudomonas mendocina).